We begin with the raw amino-acid sequence, 156 residues long: Small ribosomal subunit protein uS7 (156 aa).

The protein belongs to the universal ribosomal protein uS7 family. Part of the 30S ribosomal subunit. Contacts proteins S9 and S11.

In terms of biological role, one of the primary rRNA binding proteins, it binds directly to 16S rRNA where it nucleates assembly of the head domain of the 30S subunit. Is located at the subunit interface close to the decoding center, probably blocks exit of the E-site tRNA. The polypeptide is Small ribosomal subunit protein uS7 (Mycobacterium bovis (strain ATCC BAA-935 / AF2122/97)).